The primary structure comprises 485 residues: Ribosomal protein uS12 methylthiotransferase RimO (485 aa).

The MTTase N-terminal domain maps to 19–135 (VKVGFISLGC…IGEVVAGILA (117 aa)). The [4Fe-4S] cluster site is built by Cys-28, Cys-64, Cys-98, Cys-172, Cys-176, and Cys-179. The 230-residue stretch at 158–387 (ATPGYTAYLK…MEVQQEIARR (230 aa)) folds into the Radical SAM core domain. The TRAM domain maps to 390 to 461 (QLQVGRELEV…DYDLLGEATE (72 aa)).

This sequence belongs to the methylthiotransferase family. RimO subfamily. [4Fe-4S] cluster is required as a cofactor.

The protein localises to the cytoplasm. The enzyme catalyses L-aspartate(89)-[ribosomal protein uS12]-hydrogen + (sulfur carrier)-SH + AH2 + 2 S-adenosyl-L-methionine = 3-methylsulfanyl-L-aspartate(89)-[ribosomal protein uS12]-hydrogen + (sulfur carrier)-H + 5'-deoxyadenosine + L-methionine + A + S-adenosyl-L-homocysteine + 2 H(+). Catalyzes the methylthiolation of an aspartic acid residue of ribosomal protein uS12. The chain is Ribosomal protein uS12 methylthiotransferase RimO from Symbiobacterium thermophilum (strain DSM 24528 / JCM 14929 / IAM 14863 / T).